Reading from the N-terminus, the 287-residue chain is Toxin zeta (287 aa).

40-47 (GQPGSGKT) lines the ATP pocket. Asn-66 contributes to the substrate binding site. The active-site Proton acceptor is the Asp-67. Positions 100, 118, 120, and 128 each coordinate substrate. The interval 267-287 (KLESLQPPTPPIPKTPKLPGI) is disordered. Pro residues predominate over residues 273–287 (PPTPPIPKTPKLPGI).

It belongs to the zeta toxin family. In the presence of the epsilon antitoxin forms an inactive PezA(2)PezT(2) heterotetramer. The heterotetramer is still able to bind the UNAG substrate.

It carries out the reaction UDP-N-acetyl-alpha-D-glucosamine + ATP = UDP-N-acetyl-alpha-D-glucosamine 3'-phosphate + ADP + H(+). In terms of biological role, toxic component of a type II toxin-antitoxin (TA) system. Phosphorylates UDP-N-acetyl-D-glucosamine (UNAG) on the 3'-hydroxyl group of the N-acetyl-D-glucosamine moiety, yielding UNAG-3P. UNAG-3P inhibits MurA, the first committed step in cell wall synthesis, which is then blocked. Phosphorylation is inhibited by cognate epsilon antitoxin. Part of a postsegregational killing (PSK) system involved in the killing of plasmid-free cells. The zeta toxin induces programmed cell death. The polypeptide is Toxin zeta (Streptococcus pyogenes).